The sequence spans 459 residues: Asperlicin C monooxygenase (459 aa).

Aspartate 49, alanine 62, and arginine 121 together coordinate FAD. The active site involves arginine 199. Residues aspartate 323 and alanine 336 each contribute to the FAD site.

The protein belongs to the paxM FAD-dependent monooxygenase family. FAD serves as cofactor.

It catalyses the reaction asperlicin C + NADPH + O2 + H(+) = asperlicin E + NADP(+) + H2O. It carries out the reaction asperlicin C + NADH + O2 + H(+) = asperlicin E + NAD(+) + H2O. In terms of biological role, catalyzes the conversion of asperlicin A to form asperlicin E, a potent cholecystokinin receptor CCK(A) antagonist. The polypeptide is Asperlicin C monooxygenase (Petromyces alliaceus (Aspergillus alliaceus)).